A 129-amino-acid chain; its full sequence is Succinate dehydrogenase subunit 3-2, mitochondrial (129 aa).

A mitochondrion-targeting transit peptide spans 1–58 (MEKYQSKARFAPLSDAPFALRGALGSSNSSFNNIDHLRQSSSSGQARSYTSSPLGALR). A compositionally biased stretch (polar residues) spans 27–53 (SNSSFNNIDHLRQSSSSGQARSYTSSP). Positions 27-66 (SNSSFNNIDHLRQSSSSGQARSYTSSPLGALRPKMFPSGN) are disordered. H87 is a binding site for heme. The chain crosses the membrane as a helical span at residues 105 to 127 (IFGAALGAVIISIPLATKFSLMF).

As to quaternary structure, component of complex II composed of eight subunits in plants: four classical SDH subunits SDH1, SDH2, SDH3 and SDH4 (a flavoprotein (FP), an iron-sulfur protein (IP), and a cytochrome b composed of a large and a small subunit.), as well as four subunits unknown in mitochondria from bacteria and heterotrophic eukaryotes. Heme serves as cofactor.

It is found in the mitochondrion inner membrane. It participates in carbohydrate metabolism; tricarboxylic acid cycle. Membrane-anchoring subunit of succinate dehydrogenase (SDH). The sequence is that of Succinate dehydrogenase subunit 3-2, mitochondrial from Oryza sativa subsp. japonica (Rice).